We begin with the raw amino-acid sequence, 412 residues long: Acyl-[acyl-carrier-protein] hydrolase FATB2, chloroplastic (412 aa).

2 stretches are compositionally biased toward low complexity: residues 1 to 13 (TAAS…VPSA) and 56 to 66 (GSSVGLKSGGL). The N-terminal 46 residues, 1–46 (TAASSAFFPVPSADTSSRPGKLGNGPSSFSPLKPKSIPNGGLQVKA), are a transit peptide targeting the chloroplast. The disordered stretch occupies residues 1–78 (TAASSAFFPV…HDDAPSAPPP (78 aa)). Catalysis depends on residues Asn311, His313, and Cys348.

Belongs to the acyl-ACP thioesterase family.

It is found in the plastid. It localises to the chloroplast. It carries out the reaction tetradecanoyl-[ACP] + H2O = tetradecanoate + holo-[ACP] + H(+). It catalyses the reaction hexadecanoyl-[ACP] + H2O = hexadecanoate + holo-[ACP] + H(+). Functionally, plays an essential role in chain termination during de novo fatty acid synthesis. Possesses thioesterase activity for medium chain acyl-ACPs. Substrate preference is 14:0 &gt; 16:0 &gt; 16:1. This chain is Acyl-[acyl-carrier-protein] hydrolase FATB2, chloroplastic, found in Cuphea viscosissima (Blue waxweed).